A 358-amino-acid chain; its full sequence is Isopentenyl-diphosphate delta-isomerase (358 aa).

Residue 12–13 participates in substrate binding; it reads RK. FMN is bound by residues 69–71, serine 99, and asparagine 128; that span reads AMT. Glutamine 158 serves as a coordination point for substrate. Glutamate 159 contacts Mg(2+). Residues lysine 190, threonine 220, 267 to 269, and 288 to 289 contribute to the FMN site; these read GIR and AG.

Belongs to the IPP isomerase type 2 family. Homooctamer. Dimer of tetramers. Requires FMN as cofactor. The cofactor is NADPH. Mg(2+) serves as cofactor.

The protein resides in the cytoplasm. It carries out the reaction isopentenyl diphosphate = dimethylallyl diphosphate. Its function is as follows. Involved in the biosynthesis of isoprenoids. Catalyzes the 1,3-allylic rearrangement of the homoallylic substrate isopentenyl (IPP) to its allylic isomer, dimethylallyl diphosphate (DMAPP). This is Isopentenyl-diphosphate delta-isomerase from Listeria monocytogenes serotype 4b (strain CLIP80459).